Here is a 220-residue protein sequence, read N- to C-terminus: UPF0758 protein APL_1970 (220 aa).

Residues 98-220 form the MPN domain; it reads NINEPYLAVM…YFSFEEEKFR (123 aa). Zn(2+) contacts are provided by H169, H171, and D182. The JAMM motif signature appears at 169–182; that stretch reads HNHPSGNCTPSESD.

This sequence belongs to the UPF0758 family.

The chain is UPF0758 protein APL_1970 from Actinobacillus pleuropneumoniae serotype 5b (strain L20).